We begin with the raw amino-acid sequence, 433 residues long: Ornithine decarboxylase 1B, chloroplastic (433 aa).

Lys96 bears the N6-(pyridoxal phosphate)lysine mark. Pyridoxal 5'-phosphate contacts are provided by residues Ser228, Gly266, and 299–302 (EPGR). 342 to 343 (YD) is a substrate binding site. Cys378 acts as the Proton donor; shared with dimeric partner in catalysis. Position 379 (Asp379) interacts with substrate. Pyridoxal 5'-phosphate is bound at residue Tyr407.

This sequence belongs to the Orn/Lys/Arg decarboxylase class-II family. In terms of assembly, homodimer. Only the dimer is catalytically active, as the active sites are constructed of residues from both monomers. Requires pyridoxal 5'-phosphate as cofactor.

Its subcellular location is the plastid. It localises to the chloroplast. It carries out the reaction L-ornithine + H(+) = putrescine + CO2. It functions in the pathway alkaloid biosynthesis; nicotine biosynthesis. The protein operates within amine and polyamine biosynthesis; putrescine biosynthesis via L-ornithine pathway; putrescine from L-ornithine: step 1/1. In terms of biological role, involved in the biosynthesis of pyridine alkaloid natural products, leading mainly to the production of anabasine, anatabine, nicotine and nornicotine, effective deterrents against herbivores with antiparasitic and pesticide properties (neurotoxins); nornicotine serves as the precursor in the synthesis of the carcinogen compound N'-nitrosonornicotine (NNN). Catalyzes the first and rate-limiting step of polyamine biosynthesis that converts ornithine into putrescine, which is the precursor for the polyamines, spermidine and spermine. Polyamines are essential for cell proliferation and are implicated in cellular processes, ranging from DNA replication to apoptosis. The sequence is that of Ornithine decarboxylase 1B, chloroplastic from Nicotiana tabacum (Common tobacco).